Reading from the N-terminus, the 287-residue chain is U-megalopygitoxin(8)-Mc8 (287 aa).

A signal peptide spans 1–17 (MYLQYLVLSLFSTTVYG).

This sequence belongs to the caterpillar 8 family. Post-translationally, contains 2 disulfide bonds. In terms of tissue distribution, expressed by the venom apparatus.

Its subcellular location is the secreted. Functionally, probable toxin. In Megalopyge crispata (Black-waved flannel moth), this protein is U-megalopygitoxin(8)-Mc8.